Reading from the N-terminus, the 188-residue chain is MRVIASSIRKGNVIEQDGKLYVVVSAENIHPGKGTPVSQIEMRRISDGVKISERYKTTDQVEKATIEERNFTFLYEDGDGYHFMNPETYDQVQVSKDVVGDAAAYLQPDMTVKLSTHDVNVVSLALPQRVTLEVVETEPVTKGQTASSSYKPAVLSNGIRTTVPPHIAVGTRIVVMTEDGSYSERAKD.

Belongs to the elongation factor P family.

The protein resides in the cytoplasm. It participates in protein biosynthesis; polypeptide chain elongation. Involved in peptide bond synthesis. Stimulates efficient translation and peptide-bond synthesis on native or reconstituted 70S ribosomes in vitro. Probably functions indirectly by altering the affinity of the ribosome for aminoacyl-tRNA, thus increasing their reactivity as acceptors for peptidyl transferase. This Bradyrhizobium diazoefficiens (strain JCM 10833 / BCRC 13528 / IAM 13628 / NBRC 14792 / USDA 110) protein is Elongation factor P.